Here is a 238-residue protein sequence, read N- to C-terminus: Ribitol-5-phosphate cytidylyltransferase (238 aa).

CTP is bound by residues 7 to 10 (LAGG) and 81 to 87 (GDDRNHS).

Belongs to the IspD/TarI cytidylyltransferase family. TarI subfamily.

It carries out the reaction D-ribitol 5-phosphate + CTP + H(+) = CDP-L-ribitol + diphosphate. The protein operates within cell wall biogenesis; poly(ribitol phosphate) teichoic acid biosynthesis. In terms of biological role, catalyzes the transfer of the cytidylyl group of CTP to D-ribitol 5-phosphate. This chain is Ribitol-5-phosphate cytidylyltransferase, found in Staphylococcus epidermidis (strain ATCC 12228 / FDA PCI 1200).